We begin with the raw amino-acid sequence, 97 residues long: Large ribosomal subunit protein bL28 (97 aa).

It belongs to the bacterial ribosomal protein bL28 family.

This Nitrobacter winogradskyi (strain ATCC 25391 / DSM 10237 / CIP 104748 / NCIMB 11846 / Nb-255) protein is Large ribosomal subunit protein bL28.